The sequence spans 63 residues: Large ribosomal subunit protein eL37 (63 aa).

Residues cysteine 20, cysteine 23, cysteine 35, and cysteine 38 each coordinate Zn(2+). Residues 20–38 form a C4-type zinc finger; that stretch reads CRRCGHHSFNVRKGYCAHC.

It belongs to the eukaryotic ribosomal protein eL37 family. Requires Zn(2+) as cofactor.

Binds to the 23S rRNA. This chain is Large ribosomal subunit protein eL37, found in Thermofilum pendens (strain DSM 2475 / Hrk 5).